The chain runs to 876 residues: MAMPSYSSLSSHISITTTHTRPHPIFPCYNDTQSIPRFFISSDTGSSASKQRNIYLRLGSRKIIAGVGEGATSLSSHSDKMKTDSFPDPKLAKRDFPPGFWKDDIIDSIMSSNKVAAADEERVETLISEIKSMFRGMGDGETTPSAYDTAWVAKIPALDGSDHPHFPQTLQWILRNQLKDGSWGEEHHFLTYDRLLATLACIITLTVWRTGKTQVQKGIEFFKKHAAMMEDEADHRQPSGFEFVFPAMINEAKSLCLDLPYELPFIKQIIKKREAKLKRIPTDLLYTVPTIFLYYLEGLQEIVEWHKIIKLQSKDGSFLSSPASTAAVFMSTGNTKCLEFLNFVLMKFGNHAPCHYPIDLLERLWAVDTVQRLGIDRYFKEEIKEALDYIYSHWGERGIGWARENPVADIGVTAMGLRILRLNGYNVSSDVLRTFRDENGEFFSFMGQTERGVIDMLNLNRCSHVAFPGETVMEEAKHCTERYLWNALEDVDALDKWGLKKNIRGEVEYALKYPWLRSLPRLEARSYIENYGPNDAWLGKTMYIMPYINNGKYLELAKLDFNNVQSIHQKELRELRRWWKSSGFAELDFTRDRVAEIFFSIASSMFEPELATCRDVYTKSTICTVVLDDLYDAHGSVEDIKLFNEAVKRWDLFLLDRMPEHIKICFLGLYNLVNEIAEEGRKRQGRDVLGYIRNLWEIQLETFMKEAEWSEAKYVPSFHEYIETASVSIAGATLVLFGVLFTGEVLTDHILSQIDYRSKFAYLMGLTGRLINDTKTYQAERGEGEVASAIQCYMKDHPEFSEEEALKQIYTLMENALSDLKEEFLKAKDVPDKCKRLVFDYARSMQLFYQQGDGFTLAPNMEIKQHVKKILFEPVP.

Residues 1–64 constitute a chloroplast transit peptide; sequence MAMPSYSSLS…YLRLGSRKII (64 aa). Positions 628, 632, 772, 776, and 780 each coordinate Mg(2+). The short motif at 628-632 is the DDXXD motif element; it reads DDLYD.

This sequence belongs to the terpene synthase family. Tpsd subfamily. It depends on Mg(2+) as a cofactor.

The protein localises to the plastid. The protein resides in the chloroplast. The enzyme catalyses (+)-copalyl diphosphate = isopimara-7,15-diene + diphosphate. It participates in terpene metabolism; oleoresin biosynthesis. In terms of biological role, involved in defensive oleoresin formation in conifers in response to insect attack or other injury. Involved in diterpene (C20) olefins biosynthesis. Monofunctional enzyme lacking the DXDD motif in the class II active site relevant for the cyclization of geranylgeranyl diphosphate (GGPP). Requires (+)-copalyl diphosphate ((+)-CPP) as substrate, but no activity with GGPP or ent-CPP. Isopimaradiene is the major products of the enzyme followed by sandaracopimaradiene. The chain is Monofunctional isopimaradiene synthase, chloroplastic from Pinus contorta (Shore pine).